An 830-amino-acid polypeptide reads, in one-letter code: Formin-like protein 14 (830 aa).

Positions 1–34 (MAMAMAMPSSSPPLFFSLLNLMLLLLLLAPYCSA) are cleaved as a signal peptide. Over residues 40–59 (NNTHHRSSSPTQTTLQQLHS) the composition is skewed to polar residues. The interval 40–195 (NNTHHRSSSP…NISTLVHPTQ (156 aa)) is disordered. Composition is skewed to pro residues over residues 61-86 (DSPP…PAPR) and 95-135 (PPPP…PTPK). Residues 149–160 (YPFTNYPFFPNF) show a composition bias toward low complexity. Residues 203-223 (VLQALLLSFLSLCLLLLSALL) traverse the membrane as a helical segment. The tract at residues 235 to 446 (HHSHSHPNAR…LHSDKLKPGS (212 aa)) is disordered. A compositionally biased stretch (pro residues) spans 314–323 (RPLPPLPRVG). Low complexity predominate over residues 324-369 (PPSGEFASRSSASDPSTAPPAAAEASSSSLSPSSPSASSPTLGSSP). The FH2 domain maps to 390-823 (PKRRPQPPEP…MMGRDWNMAA (434 aa)). A compositionally biased stretch (basic and acidic residues) spans 424 to 446 (HSPSEKSMRKSRPLHSDKLKPGS).

The protein belongs to the formin-like family. Class-I subfamily.

It localises to the membrane. The protein is Formin-like protein 14 (FH14) of Oryza sativa subsp. japonica (Rice).